We begin with the raw amino-acid sequence, 266 residues long: Small ribosomal subunit protein uS2 (266 aa).

Positions 229 to 254 (RTSDKEADTTTEEVAQEEVTDTKADE) are disordered. Positions 237 to 247 (TTTEEVAQEEV) are enriched in acidic residues.

It belongs to the universal ribosomal protein uS2 family.

This chain is Small ribosomal subunit protein uS2, found in Flavobacterium psychrophilum (strain ATCC 49511 / DSM 21280 / CIP 103535 / JIP02/86).